A 185-amino-acid polypeptide reads, in one-letter code: Large ribosomal subunit protein uL5 (185 aa).

This sequence belongs to the universal ribosomal protein uL5 family. In terms of assembly, part of the 50S ribosomal subunit; part of the 5S rRNA/L5/L18/L25 subcomplex. Contacts the 5S rRNA and the P site tRNA. Forms a bridge to the 30S subunit in the 70S ribosome.

Its function is as follows. This is one of the proteins that bind and probably mediate the attachment of the 5S RNA into the large ribosomal subunit, where it forms part of the central protuberance. In the 70S ribosome it contacts protein S13 of the 30S subunit (bridge B1b), connecting the 2 subunits; this bridge is implicated in subunit movement. Contacts the P site tRNA; the 5S rRNA and some of its associated proteins might help stabilize positioning of ribosome-bound tRNAs. This chain is Large ribosomal subunit protein uL5, found in Parvibaculum lavamentivorans (strain DS-1 / DSM 13023 / NCIMB 13966).